The following is a 363-amino-acid chain: NAD(P)H-quinone oxidoreductase subunit 1, chloroplastic (363 aa).

A run of 6 helical transmembrane segments spans residues 30–50 (LVPI…IVWL), 98–118 (FSIG…VIPF), 127–147 (LSIG…GLLM), 248–268 (YSGI…LVSS), 300–320 (VFGT…FLFI), and 336–356 (LLNL…LLTT).

Belongs to the complex I subunit 1 family. As to quaternary structure, NDH is composed of at least 16 different subunits, 5 of which are encoded in the nucleus.

The protein resides in the plastid. Its subcellular location is the chloroplast thylakoid membrane. It carries out the reaction a plastoquinone + NADH + (n+1) H(+)(in) = a plastoquinol + NAD(+) + n H(+)(out). The enzyme catalyses a plastoquinone + NADPH + (n+1) H(+)(in) = a plastoquinol + NADP(+) + n H(+)(out). In terms of biological role, NDH shuttles electrons from NAD(P)H:plastoquinone, via FMN and iron-sulfur (Fe-S) centers, to quinones in the photosynthetic chain and possibly in a chloroplast respiratory chain. The immediate electron acceptor for the enzyme in this species is believed to be plastoquinone. Couples the redox reaction to proton translocation, and thus conserves the redox energy in a proton gradient. This is NAD(P)H-quinone oxidoreductase subunit 1, chloroplastic from Drimys granadensis.